Reading from the N-terminus, the 342-residue chain is Anthranilate phosphoribosyltransferase (342 aa).

Residues Gly-79, 82-83 (GD), Thr-87, 89-92 (NVST), 107-115 (KHGNRSVSS), and Ser-119 contribute to the 5-phospho-alpha-D-ribose 1-diphosphate site. Gly-79 is a binding site for anthranilate. Ser-91 is a Mg(2+) binding site. Residue Asn-110 coordinates anthranilate. Arg-165 contributes to the anthranilate binding site. 2 residues coordinate Mg(2+): Asp-223 and Glu-224.

Belongs to the anthranilate phosphoribosyltransferase family. In terms of assembly, homodimer. Requires Mg(2+) as cofactor.

The enzyme catalyses N-(5-phospho-beta-D-ribosyl)anthranilate + diphosphate = 5-phospho-alpha-D-ribose 1-diphosphate + anthranilate. Its pathway is amino-acid biosynthesis; L-tryptophan biosynthesis; L-tryptophan from chorismate: step 2/5. Functionally, catalyzes the transfer of the phosphoribosyl group of 5-phosphorylribose-1-pyrophosphate (PRPP) to anthranilate to yield N-(5'-phosphoribosyl)-anthranilate (PRA). This chain is Anthranilate phosphoribosyltransferase, found in Aeromonas hydrophila subsp. hydrophila (strain ATCC 7966 / DSM 30187 / BCRC 13018 / CCUG 14551 / JCM 1027 / KCTC 2358 / NCIMB 9240 / NCTC 8049).